The chain runs to 322 residues: 4-diphosphocytidyl-2-C-methyl-D-erythritol kinase (322 aa).

Lysine 18 is an active-site residue. 130–140 (PMGAGLGGGSS) contacts ATP. The active site involves aspartate 172.

It belongs to the GHMP kinase family. IspE subfamily.

It catalyses the reaction 4-CDP-2-C-methyl-D-erythritol + ATP = 4-CDP-2-C-methyl-D-erythritol 2-phosphate + ADP + H(+). It functions in the pathway isoprenoid biosynthesis; isopentenyl diphosphate biosynthesis via DXP pathway; isopentenyl diphosphate from 1-deoxy-D-xylulose 5-phosphate: step 3/6. Functionally, catalyzes the phosphorylation of the position 2 hydroxy group of 4-diphosphocytidyl-2C-methyl-D-erythritol. The polypeptide is 4-diphosphocytidyl-2-C-methyl-D-erythritol kinase (Psychrobacter cryohalolentis (strain ATCC BAA-1226 / DSM 17306 / VKM B-2378 / K5)).